Reading from the N-terminus, the 121-residue chain is Prefoldin subunit beta (121 aa).

It belongs to the prefoldin subunit beta family. In terms of assembly, heterohexamer of two alpha and four beta subunits.

It localises to the cytoplasm. Functionally, molecular chaperone capable of stabilizing a range of proteins. Seems to fulfill an ATP-independent, HSP70-like function in archaeal de novo protein folding. The sequence is that of Prefoldin subunit beta (pfdB) from Methanothermobacter thermautotrophicus (strain ATCC 29096 / DSM 1053 / JCM 10044 / NBRC 100330 / Delta H) (Methanobacterium thermoautotrophicum).